We begin with the raw amino-acid sequence, 585 residues long: Bestrophin-1 (585 aa).

Residues 1 to 31 (MTITYTSQVANARLGSFSRLLLCWRGSIYKL) are Cytoplasmic-facing. Position 10 (Ala10) interacts with Ca(2+). The helical transmembrane segment at 32-51 (LYGEFFIFLLCYYIIRFIYR) threads the bilayer. The Extracellular portion of the chain corresponds to 52-60 (LALTEEQQL). The chain crosses the membrane as a helical span at residues 61–82 (MFEKLTLYCDSYIQLIPISFVL). Topologically, residues 83–237 (GFYVTLVVTR…DWISIPLVYT (155 aa)) are cytoplasmic. Residues 238–255 (QVVTVAVYSFFLTCLVGR) traverse the membrane as a helical segment. Topologically, residues 256–274 (QFLNPAKAYPGHELDLVVP) are extracellular. Residues 275-288 (VFTFLQFFFYVGWL) form a helical membrane-spanning segment. Topologically, residues 289–585 (KVAEQLINPF…ALENRDEAHS (297 aa)) are cytoplasmic. Ca(2+) contacts are provided by Gln293, Asn296, Asp301, and Asp304. The auto-inhibitory segment stretch occupies residues 346–379 (PYTAASAQFRRASFMGSTFNISLNKEEMEFQPNQ).

It belongs to the anion channel-forming bestrophin (TC 1.A.46) family. Calcium-sensitive chloride channel subfamily. In terms of assembly, interacts with YWHAG; this interaction promotes the ligand-gated L-glutamate channel activity leading to the positive regulation of NMDA glutamate receptor activity through the L-glutamate secretion.

It localises to the cell membrane. The protein localises to the basolateral cell membrane. It catalyses the reaction chloride(in) = chloride(out). The catalysed reaction is hydrogencarbonate(in) = hydrogencarbonate(out). The enzyme catalyses 4-aminobutanoate(in) = 4-aminobutanoate(out). It carries out the reaction L-glutamate(out) = L-glutamate(in). Its function is as follows. Ligand-gated anion channel that allows the movement of anions across cell membranes when activated by calcium (Ca2+). Allows the movement of chloride and hydrogencarbonate. Found in a partially open conformation leading to significantly smaller chloride movement. Upon F2R/PAR-1 activation, the sequestered calcium is released into the cytosol of astrocytes, leading to the (Ca2+)-dependent release of L-glutamate into the synaptic cleft that targets the neuronal postsynaptic GRIN2A/NMDAR receptor resulting in the synaptic plasticity regulation. Upon activation of the norepinephrine-alpha-1 adrenergic receptor signaling pathway, transports as well D-serine than L-glutamate in a (Ca2+)-dependent manner, leading to activation of adjacent NMDAR receptors and therefore regulates the heterosynaptic long-term depression and metaplasticity during initial memory acquisition. Releases the 4-aminobutanoate neurotransmitter in a (Ca2+)-dependent manner, and participates in its tonic release from cerebellar glial cells. In Macaca fascicularis (Crab-eating macaque), this protein is Bestrophin-1 (BEST1).